We begin with the raw amino-acid sequence, 396 residues long: Elongation factor Tu (396 aa).

Residues 10-206 (KPHVNVGTIG…ALDTYIPLPE (197 aa)) enclose the tr-type G domain. The tract at residues 19 to 26 (GHVDHGKT) is G1. GTP is bound at residue 19–26 (GHVDHGKT). Thr26 is a binding site for Mg(2+). Residues 60-64 (GITIN) form a G2 region. Residues 81–84 (DCPG) are G3. Residues 81-85 (DCPGH) and 136-139 (NKCD) contribute to the GTP site. The G4 stretch occupies residues 136–139 (NKCD). Residues 174–176 (SAK) are G5.

This sequence belongs to the TRAFAC class translation factor GTPase superfamily. Classic translation factor GTPase family. EF-Tu/EF-1A subfamily. In terms of assembly, monomer.

It localises to the cytoplasm. The enzyme catalyses GTP + H2O = GDP + phosphate + H(+). GTP hydrolase that promotes the GTP-dependent binding of aminoacyl-tRNA to the A-site of ribosomes during protein biosynthesis. In Polaromonas sp. (strain JS666 / ATCC BAA-500), this protein is Elongation factor Tu.